The following is a 514-amino-acid chain: Bifunctional purine biosynthesis protein PurH (514 aa).

Positions 1 to 145 (MIKRALISVS…KNYQDVAVIV (145 aa)) constitute an MGS-like domain.

Belongs to the PurH family.

It carries out the reaction (6R)-10-formyltetrahydrofolate + 5-amino-1-(5-phospho-beta-D-ribosyl)imidazole-4-carboxamide = 5-formamido-1-(5-phospho-D-ribosyl)imidazole-4-carboxamide + (6S)-5,6,7,8-tetrahydrofolate. It catalyses the reaction IMP + H2O = 5-formamido-1-(5-phospho-D-ribosyl)imidazole-4-carboxamide. The protein operates within purine metabolism; IMP biosynthesis via de novo pathway; 5-formamido-1-(5-phospho-D-ribosyl)imidazole-4-carboxamide from 5-amino-1-(5-phospho-D-ribosyl)imidazole-4-carboxamide (10-formyl THF route): step 1/1. It participates in purine metabolism; IMP biosynthesis via de novo pathway; IMP from 5-formamido-1-(5-phospho-D-ribosyl)imidazole-4-carboxamide: step 1/1. This chain is Bifunctional purine biosynthesis protein PurH, found in Ruminiclostridium cellulolyticum (strain ATCC 35319 / DSM 5812 / JCM 6584 / H10) (Clostridium cellulolyticum).